Here is a 298-residue protein sequence, read N- to C-terminus: Nucleotide-binding protein MAV_3359 (298 aa).

G18–G25 is a binding site for ATP. D69–S72 lines the GTP pocket.

Belongs to the RapZ-like family.

Displays ATPase and GTPase activities. The protein is Nucleotide-binding protein MAV_3359 of Mycobacterium avium (strain 104).